Reading from the N-terminus, the 139-residue chain is Large-conductance mechanosensitive channel (139 aa).

2 consecutive transmembrane segments (helical) span residues 9–29 (AFAV…GAAF) and 79–99 (IQTV…VKAI).

It belongs to the MscL family. Homopentamer.

It localises to the cell inner membrane. Functionally, channel that opens in response to stretch forces in the membrane lipid bilayer. May participate in the regulation of osmotic pressure changes within the cell. In Pseudomonas putida (strain W619), this protein is Large-conductance mechanosensitive channel.